Consider the following 179-residue polypeptide: Small ribosomal subunit protein uS5c (179 aa).

One can recognise an S5 DRBM domain in the interval 26–89 (FVERLIKISR…TDGRKNLIDV (64 aa)).

It belongs to the universal ribosomal protein uS5 family. As to quaternary structure, part of the 30S ribosomal subunit. Contacts protein S4.

It is found in the plastid. It localises to the chloroplast. Functionally, with S4 and S12 plays an important role in translational accuracy. The protein is Small ribosomal subunit protein uS5c (rps5) of Thalassiosira pseudonana (Marine diatom).